We begin with the raw amino-acid sequence, 321 residues long: Histidine N-alpha-methyltransferase (321 aa).

An L-histidine-binding site is contributed by Tyr56. S-adenosyl-L-methionine-binding positions include Gly86, Lys92, Asp113, and 141–142 (DF). L-histidine-binding positions include Asn166, Tyr206, and 282–284 (EVS).

It belongs to the methyltransferase superfamily. EgtD family. Monomer.

It carries out the reaction L-histidine + 3 S-adenosyl-L-methionine = hercynine + 3 S-adenosyl-L-homocysteine + 3 H(+). It functions in the pathway amino-acid biosynthesis; ergothioneine biosynthesis. Its function is as follows. Catalyzes the SAM-dependent triple methylation of the alpha-amino group of histidine to form hercynine, a step in the biosynthesis pathway of ergothioneine (ERG). ERG is one of the major redox buffers which protects bacteria against redox stressors and antibiotics; loss of ERG or mycothiol (MSH, the other major redox buffer in this bacteria) leads to respiratory alterations and bioenergetic deficiencies that negatively impact virulence. The polypeptide is Histidine N-alpha-methyltransferase (egtD) (Mycobacterium tuberculosis (strain CDC 1551 / Oshkosh)).